Reading from the N-terminus, the 551-residue chain is Cation/acetate symporter ActP (551 aa).

Helical transmembrane passes span 34-54, 77-97, 104-124, 150-170, 184-204, 207-227, 263-283, 304-324, 356-376, 406-426, 430-450, 469-489, and 498-518; these read IEAI…TYWA, GLAI…SALV, GLIY…LIAE, LSAC…MVGA, VAVV…GMLA, WVQI…ALMV, ISAL…PHIL, GFIG…ILLV, FFLG…VAGL, VSKI…ILFE, IAFM…PIIF, LGLL…VTIL, and YEYP…FFSI.

Belongs to the sodium:solute symporter (SSF) (TC 2.A.21) family.

The protein resides in the cell inner membrane. In terms of biological role, transports acetate. The protein is Cation/acetate symporter ActP of Yersinia enterocolitica serotype O:8 / biotype 1B (strain NCTC 13174 / 8081).